Reading from the N-terminus, the 265-residue chain is Photosystem II 22 kDa protein, chloroplastic (265 aa).

The N-terminal 59 residues, 1–59 (MAQTMLLTSGVTAGHFLRNKSPLAQPKVHHLFLSGNSPVALPSRRQSFVPLALFKPKTK), are a transit peptide targeting the chloroplast. 2 repeat units span residues 54–158 (FKPK…FVDD) and 159–264 (PPTG…DGEE). 4 helical membrane passes run 96–116 (VAMI…KGIL), 130–150 (AEPL…GALG), 195–215 (LFVG…EIIT), and 229–249 (IPIQ…FFAA).

Belongs to the ELIP/psbS family.

Its subcellular location is the plastid. It is found in the chloroplast thylakoid membrane. In terms of biological role, plays an important role in non-photochemical quenching (NPQ), a process maintains the balance between dissipation and utilization of light energy to minimize generation of oxidizing molecules, thereby protecting the plant against photo-oxidative damage; acts upstream of DLDG1. Is not necessary for efficient light harvesting and photosynthesis. In Arabidopsis thaliana (Mouse-ear cress), this protein is Photosystem II 22 kDa protein, chloroplastic.